Consider the following 347-residue polypeptide: Dehydratase asqC (347 aa).

An N-terminal signal peptide occupies residues Met-1 to Ala-18. N-linked (GlcNAc...) asparagine glycans are attached at residues Asn-51, Asn-103, Asn-131, Asn-143, Asn-215, Asn-264, and Asn-281.

The catalysed reaction is [(1'E)-5'-(3',3'-dimethyloxiran-2'-yl)-3'-hydroxy-3'-methylpent-1'-en-1'-yl]-quinolinone B = (1'E,3'E)-5-(3,3-dimethyloxiran-2-yl)-3-methylhexa-1,3-dienyl-quinolinone B + H2O. It participates in secondary metabolite biosynthesis. It functions in the pathway alkaloid biosynthesis. The protein operates within mycotoxin biosynthesis. Its function is as follows. Dehydratase; part of the gene cluster that mediates the biosynthesis of the aspoquinolone mycotoxins. Within the pathway, the dehydratase asqC catalyzes the dehydratation of the epoxide at C-3 to produce (1'E,3'E)-5-(3,3-dimethyloxiran-2-yl)-3-methylhexa-1,3-dienyl-quinolinone B. The first step of the pathway is catalyzed by the nonribosomal peptide synthetase asqK that condenses anthranilic acid and O-methyl-L-tyrosine to produce 4'-methoxycyclopeptin. 4'-methoxycyclopeptin is then converted to 4'-methoxydehydrocyclopeptin by the ketoglutarate-dependent dioxygenase asqJ. AsqJ also converts its first product 4'-methoxydehydrocyclopeptin to 4'-methoxycyclopenin. The following conversion of 4'-methoxycyclopenin into 4'-methoxyviridicatin is catalyzed by the cyclopenase asqI. 4'-methoxyviridicatin is the precursor of quinolone natural products, and is further converted to quinolinone B. The prenyltransferase asqH1 then catalyzes the canonical Friedel-Crafts alkylation of quinolinone B with dimethylallyl cation to yield dimethylallyl quinolone, which is subjected to FAD-dependent dehydrogenation by the FAD-linked oxidoreductase asqF to yield conjugated aryl diene. The delta(3') double bond then serves as the site of the second alkylation with DMAPP catalyzed by the prenyltransferase asqH2 to yield a carbenium ion intermediate, which can be attacked by H(2)O to yield a styrenyl quinolone containing a C3'-hydroxyprenyl chain. The FAD-dependent monooxygenase asqG performs epoxidation of the terminal C7'-C8' olefin. Finally, after dehydratation of the epoxide at C3 by asqC, the quinolone epoxide rearrangement protein asqO catalyzes an enzymatic 3-exo-tet cyclization to yield the cyclopropyl-THF ring system in aspoquinolone. This is Dehydratase asqC from Emericella nidulans (strain FGSC A4 / ATCC 38163 / CBS 112.46 / NRRL 194 / M139) (Aspergillus nidulans).